Consider the following 419-residue polypeptide: Tyrosine--tRNA ligase (419 aa).

Tyrosine 34 contributes to the L-tyrosine binding site. The short motif at proline 39–asparagine 48 is the 'HIGH' region element. Residues tyrosine 169 and glutamine 173 each contribute to the L-tyrosine site. Positions lysine 229–serine 233 match the 'KMSKS' region motif. An ATP-binding site is contributed by lysine 232. Positions leucine 353–tyrosine 419 constitute an S4 RNA-binding domain.

The protein belongs to the class-I aminoacyl-tRNA synthetase family. TyrS type 1 subfamily. As to quaternary structure, homodimer.

It localises to the cytoplasm. It catalyses the reaction tRNA(Tyr) + L-tyrosine + ATP = L-tyrosyl-tRNA(Tyr) + AMP + diphosphate + H(+). Catalyzes the attachment of tyrosine to tRNA(Tyr) in a two-step reaction: tyrosine is first activated by ATP to form Tyr-AMP and then transferred to the acceptor end of tRNA(Tyr). The sequence is that of Tyrosine--tRNA ligase from Lactococcus lactis subsp. cremoris (strain MG1363).